The sequence spans 518 residues: Probable carboxypeptidase 2 (518 aa).

The first 21 residues, 1–21 (MVAYHLLTLISLGLGSHCASA), serve as a signal peptide directing secretion. Asn-46 carries an N-linked (GlcNAc...) asparagine glycan. The segment at 53-76 (PAFTSPGTVPRGFSDGTSGPTRDE) is disordered. A Peptidase M14 domain is found at 71-351 (GPTRDETMEG…VMAKSILQTA (281 aa)). Asn-116 carries N-linked (GlcNAc...) asparagine glycosylation. The Zn(2+) site is built by His-136, Glu-139, and His-224. The active-site Proton donor/acceptor is Glu-322. N-linked (GlcNAc...) asparagine glycosylation is found at Asn-393 and Asn-459.

This sequence belongs to the peptidase M14 family. Zn(2+) is required as a cofactor.

It localises to the secreted. Its function is as follows. Extracellular metalloprotease that contributes to pathogenicity. The protein is Probable carboxypeptidase 2 (MCPB) of Trichophyton verrucosum (strain HKI 0517).